A 346-amino-acid polypeptide reads, in one-letter code: Porin Omp2a (346 aa).

The first 22 residues, methionine 1–alanine 22, serve as a signal peptide directing secretion.

It belongs to the alphaproteobacteria porin family. As to quaternary structure, monomer.

The protein localises to the cell outer membrane. Functionally, forms passive diffusion pores that allow small molecular weight hydrophilic materials across the outer membrane. This is Porin Omp2a (omp2a) from Brucella ovis.